A 114-amino-acid chain; its full sequence is UPF0212 protein UNCMA_00570 (114 aa).

It belongs to the UPF0212 family.

This Methanocella arvoryzae (strain DSM 22066 / NBRC 105507 / MRE50) protein is UPF0212 protein UNCMA_00570.